The chain runs to 408 residues: UPF0496 protein At5g66670 (408 aa).

A run of 2 helical transmembrane segments spans residues 239-259 (VVFATAFVTVFVLSVVAAAMM) and 262-282 (PVLSAVASGLTTPIEVVGMWC).

It belongs to the UPF0496 family.

Its subcellular location is the membrane. The polypeptide is UPF0496 protein At5g66670 (Arabidopsis thaliana (Mouse-ear cress)).